The primary structure comprises 477 residues: ATP synthase subunit beta (477 aa).

151–158 (GGAGVGKT) lines the ATP pocket.

The protein belongs to the ATPase alpha/beta chains family. In terms of assembly, F-type ATPases have 2 components, CF(1) - the catalytic core - and CF(0) - the membrane proton channel. CF(1) has five subunits: alpha(3), beta(3), gamma(1), delta(1), epsilon(1). CF(0) has three main subunits: a(1), b(2) and c(9-12). The alpha and beta chains form an alternating ring which encloses part of the gamma chain. CF(1) is attached to CF(0) by a central stalk formed by the gamma and epsilon chains, while a peripheral stalk is formed by the delta and b chains.

It localises to the cell inner membrane. It carries out the reaction ATP + H2O + 4 H(+)(in) = ADP + phosphate + 5 H(+)(out). Functionally, produces ATP from ADP in the presence of a proton gradient across the membrane. The catalytic sites are hosted primarily by the beta subunits. The polypeptide is ATP synthase subunit beta (Bradyrhizobium diazoefficiens (strain JCM 10833 / BCRC 13528 / IAM 13628 / NBRC 14792 / USDA 110)).